A 1168-amino-acid chain; its full sequence is Protein VARIATION IN COMPOUND TRIGGERED ROOT growth response (1168 aa).

In terms of domain architecture, TIR spans 10–171 (WVYDVFLSFS…EIANDVLAKL (162 aa)). Residue Glu-85 is part of the active site. The NB-ARC domain occupies 187–452 (EDHIANMSVL…ACLFNHVKVR (266 aa)). LRR repeat units follow at residues 539–562 (TSKV…LFLD), 606–629 (LRNL…AMSF), 631–653 (CLKE…SKAT), 676–699 (LNKL…GFNL), 701–720 (SLDY…PEFA), 721–744 (TNIS…YFKN), 795–820 (LNNL…NLES), 839–865 (STNI…FFNL), 873–896 (CREL…SFSN), and 1065–1089 (NVPL…DWRS).

This sequence belongs to the disease resistance NB-LRR family. Part of a nuclear protein complex made of VICTR, PAD4 and EDS1. Interacts (via TIR domain) with PAD4 and EDS1.

It is found in the cytoplasm. It localises to the nucleus. The enzyme catalyses NAD(+) + H2O = ADP-D-ribose + nicotinamide + H(+). In terms of biological role, disease resistance protein of the TIR-NB-LRR-type. Part of the RPS6 locus that contains a cluster of several paralogous disease resistance (R) genes. Resistance proteins guard the plant against pathogens that contain an appropriate avirulence protein via an indirect interaction with this avirulence protein. That triggers a defense system including the hypersensitive response, which restricts the pathogen growth. Required for [5-(3,4-dichlorophenyl)furan-2-yl]-piperidine-1-ylmethanethione-(DFPM-) induced root growth arrest due to reduced number of meristem cells in the division zone of the primary root and inhibition of abscisic acid- (ABA-) induced stomatal closing. The polypeptide is Protein VARIATION IN COMPOUND TRIGGERED ROOT growth response (VICTR) (Arabidopsis thaliana (Mouse-ear cress)).